The chain runs to 334 residues: N-acetyl-gamma-glutamyl-phosphate reductase (334 aa).

Cysteine 154 is a catalytic residue.

This sequence belongs to the NAGSA dehydrogenase family. Type 1 subfamily.

The protein resides in the cytoplasm. The enzyme catalyses N-acetyl-L-glutamate 5-semialdehyde + phosphate + NADP(+) = N-acetyl-L-glutamyl 5-phosphate + NADPH + H(+). Its pathway is amino-acid biosynthesis; L-arginine biosynthesis; N(2)-acetyl-L-ornithine from L-glutamate: step 3/4. Its function is as follows. Catalyzes the NADPH-dependent reduction of N-acetyl-5-glutamyl phosphate to yield N-acetyl-L-glutamate 5-semialdehyde. In Yersinia pseudotuberculosis serotype I (strain IP32953), this protein is N-acetyl-gamma-glutamyl-phosphate reductase.